The following is a 710-amino-acid chain: Probable GTP diphosphokinase RSH2, chloroplastic (710 aa).

A chloroplast-targeting transit peptide spans 1–63; sequence MVVATTIALY…SSLFSSASVK (63 aa). The HD domain occupies 233–337; that stretch reads YLQHCVETAM…IKLADRLHNM (105 aa).

It belongs to the RelA/SpoT family.

Its subcellular location is the plastid. It localises to the chloroplast. It catalyses the reaction GTP + ATP = guanosine 3'-diphosphate 5'-triphosphate + AMP. Its function is as follows. Probable ppGpp (guanosine 3'-diphosphate 5'-diphosphate) synthetase that may be involved in a rapid plant ppGpp-mediated response to pathogens and other stresses. The sequence is that of Probable GTP diphosphokinase RSH2, chloroplastic (RSH2) from Arabidopsis thaliana (Mouse-ear cress).